Reading from the N-terminus, the 218-residue chain is Ribonuclease T (218 aa).

The Exonuclease domain maps to 24-198 (VIIDVETAGF…YDAERTAELF (175 aa)). Positions 27, 29, 185, and 190 each coordinate Mg(2+). Residue His-185 is the Proton donor/acceptor of the active site.

It belongs to the RNase T family. As to quaternary structure, homodimer. Mg(2+) serves as cofactor.

Functionally, trims short 3' overhangs of a variety of RNA species, leaving a one or two nucleotide 3' overhang. Responsible for the end-turnover of tRNA: specifically removes the terminal AMP residue from uncharged tRNA (tRNA-C-C-A). Also appears to be involved in tRNA biosynthesis. The protein is Ribonuclease T of Histophilus somni (strain 129Pt) (Haemophilus somnus).